The following is a 1557-amino-acid chain: Probable kinase PglW (1557 aa).

The NERD domain maps to Ser-12–Asn-130. Protein kinase domains lie at Glu-195–Val-490 and Trp-530–Leu-816. ATP contacts are provided by residues Leu-536–Ala-544 and Lys-564. Disordered stretches follow at residues Asp-615 to Glu-634 and Thr-821 to Arg-861. Residues Pro-830 to Asp-849 show a composition bias toward low complexity.

The protein belongs to the protein kinase superfamily. Ser/Thr protein kinase family.

Its function is as follows. BREX systems (bacteriophage exclusion) provide immunity against bacteriophage. Part of a type 2 BREX system. Previously called the phage growth limitation (Pgl) system, it confers protection against bacteriophage phiC31. The bacteria allows one cycle of phage infection, but subsequent cycles are impaired, protecting the original bacterial colony. The system undergoes high rates (10(-3) to 10(-4)) of phase reversion, i.e. loss and regain of phiC31 resistance. When the pglW-pglX-pglY-pglZ genes are transformed into a susceptible S.lividans (strain 1326) they confer resistance to infection by phage phiC31 and phiBT1; all 4 genes are necessary. The proteins has kinase domains and might bind DNA. Autophosphorylates when synthesized in vitro, cannot be expressed in E.coli. This Streptomyces coelicolor (strain ATCC BAA-471 / A3(2) / M145) protein is Probable kinase PglW.